The primary structure comprises 340 residues: Cell invasion protein SipD (340 aa).

Disordered regions lie at residues 1 to 26 (MLNI…PSAS) and 57 to 76 (QAQQ…NDER). Residues 291-319 (FKAQEENLKTTLQTLTQKYSNANSLYDNL) are a coiled coil.

This sequence belongs to the invasin protein D family.

The protein localises to the secreted. Its function is as follows. Required for translocation of effector proteins via the type III secretion system SPI-1, which is essential for an efficient bacterial internalization. Probably acts by modulating the secretion of SipA, SipB, and SipC. The chain is Cell invasion protein SipD (sipD) from Salmonella typhi.